A 165-amino-acid polypeptide reads, in one-letter code: Natriuretic peptide Na-NP (165 aa).

The first 25 residues, 1–25 (MVGLSRLAGGGLLLVLALLPLALDG), serve as a signal peptide directing secretion. A propeptide spanning residues 26-83 (KPAPEALHKPPTGLRTSLAALRILGYLRPDSKQSRAARDRMLHPEQQVGGGGDSRPLQ) is cleaved from the precursor. A compositionally biased stretch (basic and acidic residues) spans 56 to 68 (SKQSRAARDRMLH). 2 disordered regions span residues 56 to 100 (SKQS…QKID) and 135 to 165 (PDSK…SRVI). Cys-94 and Cys-110 are disulfide-bonded. Residues 129-165 (ILEYLRPDSKRSRATRDRMLHPEQQVGGGGGGGSRVI) constitute a propeptide that is removed on maturation. Basic and acidic residues predominate over residues 135–149 (PDSKRSRATRDRMLH). The segment covering 154–165 (VGGGGGGGSRVI) has biased composition (gly residues).

It belongs to the natriuretic peptide family. As to expression, expressed by the venom gland.

It localises to the secreted. Functionally, natriuretic peptide that dose-dependently induces the rapid relaxation of rat aortic strips phenylephrine-precontracted. Acts by stimulating cGMP production in a dose-dependent manner (by probably activating NPR1 and/or NPR2). May also show potent hypotensive effects. The sequence is that of Natriuretic peptide Na-NP from Naja atra (Chinese cobra).